A 366-amino-acid chain; its full sequence is MWPLSHRHLCLAFLLVCVLSAISFFLHIHQDSIRHGLGLSVLCPDRRLVTPPVAIFCLPGTPMSPNTSSPCPQNSASLSGTWTIYPDGRFGNQMGQYATLLALAQLNGRRAFILPAMHAALAPVFRITLPVLAPEVDSRTPWRELRLHDWMSEEYADLGDPFLKLSGFPCSWTFFHHLREQIRSEFTLHDHLREEAQSVLRRLRLGRSGDQPRTFVGVHVRRGDYLQVMPQRWKGVVGNGAYLREAMDWFRARHEAPVFVVTSNGMDWCRENIDASKGDVMFAGDGQEASPWKDFALLTQCNHTIMTIGTFGFWAAYLAGGDTVYLANFTLPDSEFLKIFKPEAAFLPEWVGINADLSPLWTLAEP.

Over 1 to 8 (MWPLSHRH) the chain is Cytoplasmic. The helical; Signal-anchor for type II membrane protein transmembrane segment at 9–25 (LCLAFLLVCVLSAISFF) threads the bilayer. The Lumenal portion of the chain corresponds to 26–366 (LHIHQDSIRH…LSPLWTLAEP (341 aa)). N-linked (GlcNAc...) asparagine glycosylation is found at asparagine 66, asparagine 302, and asparagine 328.

It belongs to the glycosyltransferase 11 family.

It is found in the golgi apparatus. The protein resides in the golgi stack membrane. The catalysed reaction is a beta-D-galactosyl-(1-&gt;4)-N-acetyl-beta-D-glucosaminyl derivative + GDP-beta-L-fucose = an alpha-L-Fuc-(1-&gt;2)-beta-D-Gal-(1-&gt;4)-beta-D-GlcNAc derivative + GDP + H(+). It catalyses the reaction a ganglioside GA1 + GDP-beta-L-fucose = a ganglioside Fuc-GA1 + GDP + H(+). The enzyme catalyses a beta-D-Gal-(1-&gt;3)-beta-D-GlcNAc-(1-&gt;3)-beta-D-Gal-(1-&gt;4)-beta-D-Glc-(1&lt;-&gt;1')-Cer(d18:1(4E)) + GDP-beta-L-fucose = alpha-L-fucosyl-(1-&gt;2)- beta-D-galactosyl-(1-&gt;3)-N-acetyl-beta-D-glucosaminyl-(1-&gt;3)-beta-D-galactosyl-(1-&gt;4)-beta-D-glucosyl-(1&lt;-&gt;1')-N-acylsphing-4-enine + GDP + H(+). It carries out the reaction a neolactoside nLc4Cer(d18:1(4E)) + GDP-beta-L-fucose = a neolactoside IV(2)-alpha-Fuc-nLc4Cer(d18:1(4E)) + GDP + H(+). The catalysed reaction is a ganglioside GM1 + GDP-beta-L-fucose = a ganglioside Fuc-GM1 + GDP + H(+). It catalyses the reaction beta-D-galactosyl-(1-&gt;3)-N-acetyl-D-galactosamine + GDP-beta-L-fucose = alpha-L-fucosyl-(1-&gt;2)-beta-D-galactosyl-(1-&gt;3)-N-acetyl-D-galactosamine + GDP + H(+). The protein operates within protein modification; protein glycosylation. Catalyzes the transfer of L-fucose, from a guanosine diphosphate-beta-L-fucose, to the terminal galactose residue of glycoconjugates through an alpha(1,2) linkage leading to H antigen synthesis that is an intermediate substrate in the synthesis of ABO blood group antigens. H antigen is essential for maturation of the glomerular layer of the main olfactory bulb, in cell migration and early cell-cell contacts during tumor associated angiogenesis. Preferentially fucosylates soluble lactose and to a lesser extent fucosylates glycolipids gangliosides GA1 and GM1a. The protein is Galactoside alpha-(1,2)-fucosyltransferase 1 of Aotus azarae (Azara's night monkey).